Here is a 375-residue protein sequence, read N- to C-terminus: UDP-N-acetylglucosamine--N-acetylmuramyl-(pentapeptide) pyrophosphoryl-undecaprenol N-acetylglucosamine transferase (375 aa).

UDP-N-acetyl-alpha-D-glucosamine is bound by residues 13-15 (TGG), N124, R165, S193, and Q294.

It belongs to the glycosyltransferase 28 family. MurG subfamily.

It localises to the cell inner membrane. The catalysed reaction is di-trans,octa-cis-undecaprenyl diphospho-N-acetyl-alpha-D-muramoyl-L-alanyl-D-glutamyl-meso-2,6-diaminopimeloyl-D-alanyl-D-alanine + UDP-N-acetyl-alpha-D-glucosamine = di-trans,octa-cis-undecaprenyl diphospho-[N-acetyl-alpha-D-glucosaminyl-(1-&gt;4)]-N-acetyl-alpha-D-muramoyl-L-alanyl-D-glutamyl-meso-2,6-diaminopimeloyl-D-alanyl-D-alanine + UDP + H(+). Its pathway is cell wall biogenesis; peptidoglycan biosynthesis. In terms of biological role, cell wall formation. Catalyzes the transfer of a GlcNAc subunit on undecaprenyl-pyrophosphoryl-MurNAc-pentapeptide (lipid intermediate I) to form undecaprenyl-pyrophosphoryl-MurNAc-(pentapeptide)GlcNAc (lipid intermediate II). In Brucella anthropi (strain ATCC 49188 / DSM 6882 / CCUG 24695 / JCM 21032 / LMG 3331 / NBRC 15819 / NCTC 12168 / Alc 37) (Ochrobactrum anthropi), this protein is UDP-N-acetylglucosamine--N-acetylmuramyl-(pentapeptide) pyrophosphoryl-undecaprenol N-acetylglucosamine transferase.